We begin with the raw amino-acid sequence, 150 residues long: Deoxyuridine 5'-triphosphate nucleotidohydrolase (150 aa).

Substrate is bound by residues 69 to 71, Asn-82, 86 to 88, and Met-96; these read RSG and LID.

The protein belongs to the dUTPase family. The cofactor is Mg(2+).

It catalyses the reaction dUTP + H2O = dUMP + diphosphate + H(+). Its pathway is pyrimidine metabolism; dUMP biosynthesis; dUMP from dCTP (dUTP route): step 2/2. In terms of biological role, this enzyme is involved in nucleotide metabolism: it produces dUMP, the immediate precursor of thymidine nucleotides and it decreases the intracellular concentration of dUTP so that uracil cannot be incorporated into DNA. This Acinetobacter baumannii (strain AB307-0294) protein is Deoxyuridine 5'-triphosphate nucleotidohydrolase.